The chain runs to 421 residues: Core-capsid bridging protein (421 aa).

The protein belongs to the adenoviridae core-capsid bridging protein family. Monomer. Homodimer. Exists in equilibrium between monomers and dimers in solution. Interacts with the histone-like nucleoprotein; this interactions bridge the virus core to the capsid. Interacts with core protein X; this interactions bridge the virus core to the capsid. Interacts with the endosome lysis protein VI; this interactions bridge the virus core to the capsid. Interacts with the peripentonal hexons. Interacts with host NPM1; this interaction might play a role in virus assembly.

The protein resides in the virion. It localises to the host nucleus. Its subcellular location is the host nucleolus. In terms of biological role, associates loosely with the viral DNA to form an outer shell around the nucleoprotein-DNA complex and links it with the capsid by binding the endosome lysis protein. Dissociates from the viral genome during entry. Might be involved in nuclear capsid assembly of the viral particles through its association with NPM1/nucleophosmin. The sequence is that of Core-capsid bridging protein from Canine adenovirus serotype 1 (strain CLL) (CAdV-1).